A 665-amino-acid polypeptide reads, in one-letter code: Prelamin-A/C (665 aa).

Residue Met-1 is modified to N-acetylmethionine. The segment at 1–27 (METPSQRRPTRSGAQASSTPLSPTRIT) is disordered. The interval 1–33 (METPSQRRPTRSGAQASSTPLSPTRITRLQEKE) is head. The tract at residues 1–130 (METPSQRRPT…TKKEGDLLAA (130 aa)) is interaction with MLIP. Thr-3 bears the Phosphothreonine mark. Phosphoserine is present on Ser-5. Position 10 is a phosphothreonine (Thr-10). 2 positions are modified to phosphoserine: Ser-12 and Ser-18. At Thr-19 the chain carries Phosphothreonine. Ser-22 carries the phosphoserine modification. An IF rod domain is found at 31–387 (EKEDLQELND…KLLEGEEERL (357 aa)). Lys-32 carries the post-translational modification N6-acetyllysine; alternate. Lys-32 is subject to N6-succinyllysine; alternate. A Glycyl lysine isopeptide (Lys-Gly) (interchain with G-Cter in SUMO2); alternate cross-link involves residue Lys-32. Residues 34-70 (DLQELNDRLAVYIDRVRSLETENAGLRLRITESEEVV) form a coil 1A region. Phosphoserine occurs at positions 51, 66, and 71. Residues 71-80 (SREVSGIKAA) are linker 1. Lys-78 and Lys-97 each carry N6-acetyllysine. The tract at residues 81–218 (YEAELGDARK…NIYSEELRET (138 aa)) is coil 1B. Lys-97 is covalently cross-linked (Glycyl lysine isopeptide (Lys-Gly) (interchain with G-Cter in SUMO2)). Ser-107 bears the Phosphoserine mark. N6-acetyllysine occurs at positions 108, 114, 123, 135, 144, and 155. N6-acetyllysine; alternate is present on Lys-171. Lys-171 bears the N6-succinyllysine; alternate mark. Lys-171 participates in a covalent cross-link: Glycyl lysine isopeptide (Lys-Gly) (interchain with G-Cter in SUMO2); alternate. N6-acetyllysine is present on residues Lys-180, Lys-201, and Lys-208. A Glycyl lysine isopeptide (Lys-Gly) (interchain with G-Cter in SUMO2); alternate cross-link involves residue Lys-201. Lys-201 participates in a covalent cross-link: Glycyl lysine isopeptide (Lys-Gly) (interchain with G-Cter in SUMO); alternate. Lys-208 participates in a covalent cross-link: Glycyl lysine isopeptide (Lys-Gly) (interchain with G-Cter in SUMO2). At Ser-212 the chain carries Phosphoserine. Residues Lys-219 and Lys-233 each participate in a glycyl lysine isopeptide (Lys-Gly) (interchain with G-Cter in SUMO2) cross-link. Residues 219 to 242 (KRRHETRLVEIDNGKQREFESRLA) are linker 2. Residues Lys-233, Lys-260, Lys-265, and Lys-270 each carry the N6-acetyllysine modification. Residues 243-383 (DALQELRAQH…HAYRKLLEGE (141 aa)) form a coil 2 region. Lys-260 is covalently cross-linked (Glycyl lysine isopeptide (Lys-Gly) (interchain with G-Cter in SUMO2); alternate). A Glycyl lysine isopeptide (Lys-Gly) (interchain with G-Cter in SUMO2); alternate cross-link involves residue Lys-270. A phosphoserine mark is found at Ser-277, Ser-282, Ser-301, and Ser-307. Lys-311 is covalently cross-linked (Glycyl lysine isopeptide (Lys-Gly) (interchain with G-Cter in SUMO2); alternate). An N6-acetyllysine mark is found at Lys-311, Lys-316, and Lys-341. Residues Lys-366 and Lys-378 each participate in a glycyl lysine isopeptide (Lys-Gly) (interchain with G-Cter in SUMO2) cross-link. The disordered stretch occupies residues 384-442 (EERLRLSPSPTSQRSRGRASSHSSQSQGGGSVTKKRKLESSESRSSFSQHARTSGRVAV). The segment at 384–665 (EERLRLSPSP…TQSSQNCSIM (282 aa)) is tail. A phosphoserine mark is found at Ser-390, Ser-392, Ser-395, Ser-398, Ser-403, Ser-404, Ser-406, Ser-407, Ser-409, and Ser-414. A compositionally biased stretch (low complexity) spans 395–409 (SQRSRGRASSHSSQS). Thr-416 carries the phosphothreonine modification. Position 417 is an N6-acetyllysine (Lys-417). Residues Lys-417 and Lys-420 each participate in a glycyl lysine isopeptide (Lys-Gly) (interchain with G-Cter in SUMO2) cross-link. Positions 417 to 422 (KKRKLE) match the Nuclear localization signal motif. Phosphoserine is present on residues Ser-423, Ser-426, Ser-429, and Ser-431. Residues 428-545 (SSFSQHARTS…EEVAMRKLVR (118 aa)) form the LTD domain. Lys-450 is covalently cross-linked (Glycyl lysine isopeptide (Lys-Gly) (interchain with G-Cter in SUMO2); alternate). N6-acetyllysine is present on residues Lys-450 and Lys-457. 2 positions are modified to phosphoserine: Ser-458 and Ser-463. Residues Lys-470 and Lys-486 each participate in a glycyl lysine isopeptide (Lys-Gly) (interchain with G-Cter in SUMO2) cross-link. Lys-486 carries the post-translational modification N6-acetyllysine. Thr-496 is modified (phosphothreonine). Ser-500 carries the post-translational modification Phosphoserine. Residues Thr-505 and Thr-510 each carry the phosphothreonine modification. Ser-546 bears the Phosphoserine mark. The residue at position 548 (Thr-548) is a Phosphothreonine. Over residues 552 to 561 (DNDDEEEDGD) the composition is skewed to acidic residues. Residues 552 to 577 (DNDDEEEDGDELLHHHRGSHCSSSGD) are disordered. A phosphoserine mark is found at Ser-570 and Ser-573. Residue Lys-599 forms a Glycyl lysine isopeptide (Lys-Gly) (interchain with G-Cter in SUMO2); alternate linkage. Lys-599 is covalently cross-linked (Glycyl lysine isopeptide (Lys-Gly) (interchain with G-Cter in SUMO1); alternate). 4 positions are modified to phosphoserine: Ser-613, Ser-614, Ser-617, and Ser-620. O-linked (GlcNAc) serine glycosylation is found at Ser-626 and Ser-629. Phosphoserine occurs at positions 629, 633, 637, and 653. Positions 648 to 662 (LLGNSSPRTQSSQNC) are cleaved as a propeptide — removed in Lamin-A/C form. Cys-662 carries the cysteine methyl ester modification. Cys-662 is lipidated: S-farnesyl cysteine. A propeptide spans 663–665 (SIM) (removed in Prelamin-A/C form and in Lamin-A/C form).

The protein belongs to the intermediate filament family. In terms of assembly, homodimer of lamin A and lamin C. Lamin dimers then assemble into dimeric head-to-tail polymers. Ultimately, two head-to-tail polymers assemble laterally into a protofilament with a uniformly shaped rod of 3.5 nm in diameter. Interacts with lamin-associated polypeptides IA, IB and TMPO-alpha, RB1 and with emerin. Interacts with SREBF1, SREBF2, SUN2 and TMEM43. Interacts with TMEM201. Proteolytically processed isoform A interacts with NARF. Interacts with SUN1. Interacts with MLIP. Interacts with DMPK; may regulate nuclear envelope stability. Interacts with SUV39H1; the interaction increases stability of SUV39H1. Interacts with SYNE2. Interacts with ITSN1 isoform 2. Interacts with IFFO1; enables the formation of an interior nucleoskeleton that is recruited to DNA double-strand breaks. Interacts with EMD. As to quaternary structure, interacts (via C-terminus) with LEMD2 (via N-terminus) (in vitro). Proteolytic cleavage of the C-terminal of 18 residues of prelamin-A/C results in the production of lamin-A/C. The prelamin-A/C maturation pathway includes farnesylation of CAAX motif by protein farnesyltransferase (FNTA and FNTB), removal of the last three amino acids (-AAX) by RCE1/FACE2 and/or ZMPSTE24, methylation of the C-terminal cysteine by ICMT and endoproteolytic removal of the last 15 C-terminal amino acids by ZMPSTE24. Proteolytic cleavage requires prior farnesylation and methylation, and absence of these blocks cleavage. In terms of processing, farnesylation of prelamin-A/C facilitates nuclear envelope targeting. Post-translationally, phosphorylation plays a key role in lamin organization, subcellular localization and nuclear envelope disintegration. Phosphorylation by CDK1 at Ser-22 and Ser-392 at the onset of mitosis drives lamin disassembly and nuclear envelope breakdown. Phosphorylation at Ser-22 and Ser-392 during interphase promotes localization to the nucleoplasm and regulates lamina assembly. Phosphorylation at Ser-22, Ser-392 and Ser-629 during interphase causes redistribution between the nucleus and the cytoplasm. Phosphorylation at Ser-22 by CDK1 regulates matrix stiffness. Phosphorylation status of Ser-22 determines its localization between double-strand break (DSB) sites and the nuclear matrix. Phosphorylated by ATR at Ser-282 in response to DNA damage, leading to lamin disassembly and nuclear envelope rupture. Phosphorylation also regulates stability in micronuclei arising from genome instability: phosphorylation at Ser-395 by ATR in response to genome instability and double-stranded DNA breaks primes LMNA for subsequent phosphorylation at Ser-392 by CDK1 and micronuclei envelope rupture. The rupture of micronuclear envelope triggers the cGAS-STING pathway thereby activating the type I interferon response and innate immunity. Acetylation by KAT8 is required for nuclear architecture. In terms of processing, sumoylation is necessary for the localization to the nuclear envelope.

The protein localises to the nucleus lamina. It is found in the nucleus envelope. It localises to the nucleus. The protein resides in the nucleoplasm. Its subcellular location is the nucleus matrix. Functionally, lamins are intermediate filament proteins that assemble into a filamentous meshwork, and which constitute the major components of the nuclear lamina, a fibrous layer on the nucleoplasmic side of the inner nuclear membrane. Lamins provide a framework for the nuclear envelope, bridging the nuclear envelope and chromatin, thereby playing an important role in nuclear assembly, chromatin organization, nuclear membrane and telomere dynamics. Lamin A and C also regulate matrix stiffness by conferring nuclear mechanical properties. The structural integrity of the lamina is strictly controlled by the cell cycle, as seen by the disintegration and formation of the nuclear envelope in prophase and telophase, respectively. Lamin A and C are present in equal amounts in the lamina of mammals. Also invoved in DNA repair: recruited by DNA repair proteins XRCC4 and IFFO1 to the DNA double-strand breaks (DSBs) to prevent chromosome translocation by immobilizing broken DNA ends. Required for normal development of peripheral nervous system and skeletal muscle and for muscle satellite cell proliferation. Required for osteoblastogenesis and bone formation. Also prevents fat infiltration of muscle and bone marrow, helping to maintain the volume and strength of skeletal muscle and bone. Required for cardiac homeostasis. In terms of biological role, prelamin-A/C can accelerate smooth muscle cell senescence. It acts to disrupt mitosis and induce DNA damage in vascular smooth muscle cells (VSMCs), leading to mitotic failure, genomic instability, and premature senescence. The sequence is that of Prelamin-A/C (Lmna) from Rattus norvegicus (Rat).